The sequence spans 403 residues: Large ribosomal subunit protein uL3 (403 aa).

The tract at residues 1-37 (MSHRKFSAPRHGSLGFLPRKRSSRHRGKVKSFPKDDP) is disordered. A Phosphoserine modification is found at serine 13. Residues 18–31 (PRKRSSRHRGKVKS) show a composition bias toward basic residues. A Glycyl lysine isopeptide (Lys-Gly) (interchain with G-Cter in SUMO2) cross-link involves residue lysine 39. Lysine 136 bears the N6-acetyllysine mark. Residues lysine 224 and lysine 226 each participate in a glycyl lysine isopeptide (Lys-Gly) (interchain with G-Cter in SUMO2) cross-link. Histidine 245 is modified (tele-methylhistidine). N6-acetyllysine; alternate occurs at positions 286 and 294. Residue lysine 286 forms a Glycyl lysine isopeptide (Lys-Gly) (interchain with G-Cter in SUMO2); alternate linkage. Lysine 294 participates in a covalent cross-link: Glycyl lysine isopeptide (Lys-Gly) (interchain with G-Cter in SUMO1); alternate. At serine 304 the chain carries Phosphoserine. The residue at position 366 (lysine 366) is an N6-acetyllysine; alternate. A Glycyl lysine isopeptide (Lys-Gly) (interchain with G-Cter in SUMO2); alternate cross-link involves residue lysine 366. N6-acetyllysine is present on lysine 373. Residues lysine 386, lysine 393, and lysine 399 each participate in a glycyl lysine isopeptide (Lys-Gly) (interchain with G-Cter in SUMO2) cross-link.

It belongs to the universal ribosomal protein uL3 family. Component of the large ribosomal subunit. Interacts with DHX33. Constitutively monomethylated at His-245 by METTL18. Methylation at His-245 regulates translation elongation by slowing ribosome traversal on tyrosine codons: slower elongation provides enough time for proper folding of synthesized proteins and prevents cellular aggregation of tyrosine-rich proteins. It is not required for incorporation of RPL3 into ribosomes.

The protein resides in the nucleus. Its subcellular location is the nucleolus. The protein localises to the cytoplasm. Functionally, component of the large ribosomal subunit. The ribosome is a large ribonucleoprotein complex responsible for the synthesis of proteins in the cell. The sequence is that of Large ribosomal subunit protein uL3 (RPL3) from Homo sapiens (Human).